An 849-amino-acid chain; its full sequence is Serrate RNA effector molecule homolog A (849 aa).

2 disordered regions span residues Met1–Asp90 and Lys276–Leu409. Basic and acidic residues-rich tracts occupy residues Tyr8–Leu73, Lys276–Asn306, and Glu314–Lys342. Residues Ser354 to Thr364 are compositionally biased toward acidic residues. Basic and acidic residues predominate over residues Arg381–Lys405.

This sequence belongs to the ARS2 family. In terms of assembly, interacts ncbp1/cbp80.

The protein resides in the nucleus. The protein localises to the nucleoplasm. It is found in the cytoplasm. Functionally, acts as a mediator between the cap-binding complex (CBC) and the primary microRNAs (miRNAs) processing machinery during cell proliferation. Contributes to the stability and delivery of capped primary miRNA transcripts to the primary miRNA processing complex, thereby playing a role in RNA-mediated gene silencing (RNAi) by miRNAs. In Xenopus laevis (African clawed frog), this protein is Serrate RNA effector molecule homolog A (srrt-a).